The sequence spans 623 residues: DNA-directed RNA polymerase subunit beta' (623 aa).

The Zn(2+) site is built by Cys-70, Cys-72, Cys-85, and Cys-88. Mg(2+) is bound by residues Asp-466, Asp-468, and Asp-470.

The protein belongs to the RNA polymerase beta' chain family. RpoC1 subfamily. In plastids the minimal PEP RNA polymerase catalytic core is composed of four subunits: alpha, beta, beta', and beta''. When a (nuclear-encoded) sigma factor is associated with the core the holoenzyme is formed, which can initiate transcription. Mg(2+) serves as cofactor. The cofactor is Zn(2+).

The protein resides in the plastid. The protein localises to the chloroplast. The enzyme catalyses RNA(n) + a ribonucleoside 5'-triphosphate = RNA(n+1) + diphosphate. DNA-dependent RNA polymerase catalyzes the transcription of DNA into RNA using the four ribonucleoside triphosphates as substrates. This is DNA-directed RNA polymerase subunit beta' from Rhodomonas salina (Cryptomonas salina).